The chain runs to 310 residues: MNKANLLHIDTNIKITLLAEVSVGISANSILFIAYLCMLLGENRHKPIDLYIAFLSLTQLMLLITMGLIAVDMFMPWGRWDSTTCQSLIYLHRFLRGLTLCATCLLNVLWTITLSSRNSCLAKFKHKYPHHISGAFLFLCVLYMSFSSHFLVSMTVTPNLTSENFMYVTQSCSLLPMSYSRTSMFSTPVAIRETFLISLMALSSGYMVALLWRHKKQAQHLRSTSLSSKASPEQRATRTILLLMSFFVVFYILDTVIFHSRMKFKDGSILYCFQIIVSHSYVTVSPFVFICTEKHIIKFLRSMCGRIANI.

Residues 1–20 are Extracellular-facing; that stretch reads MNKANLLHIDTNIKITLLAE. Residues 21 to 41 form a helical membrane-spanning segment; the sequence is VSVGISANSILFIAYLCMLLG. The Cytoplasmic segment spans residues 42 to 50; that stretch reads ENRHKPIDL. Residues 51 to 71 traverse the membrane as a helical segment; it reads YIAFLSLTQLMLLITMGLIAV. Over 72-93 the chain is Extracellular; that stretch reads DMFMPWGRWDSTTCQSLIYLHR. Cys-85 and Cys-172 are joined by a disulfide. Residues 94 to 114 form a helical membrane-spanning segment; it reads FLRGLTLCATCLLNVLWTITL. The Cytoplasmic portion of the chain corresponds to 115–131; that stretch reads SSRNSCLAKFKHKYPHH. A helical membrane pass occupies residues 132 to 152; it reads ISGAFLFLCVLYMSFSSHFLV. At 153–190 the chain is on the extracellular side; that stretch reads SMTVTPNLTSENFMYVTQSCSLLPMSYSRTSMFSTPVA. N-linked (GlcNAc...) asparagine glycosylation occurs at Asn-159. A helical transmembrane segment spans residues 191–211; it reads IRETFLISLMALSSGYMVALL. The Cytoplasmic portion of the chain corresponds to 212–238; it reads WRHKKQAQHLRSTSLSSKASPEQRATR. A helical membrane pass occupies residues 239-259; that stretch reads TILLLMSFFVVFYILDTVIFH. At 260-268 the chain is on the extracellular side; that stretch reads SRMKFKDGS. Residues 269 to 289 traverse the membrane as a helical segment; the sequence is ILYCFQIIVSHSYVTVSPFVF. At 290–310 the chain is on the cytoplasmic side; it reads ICTEKHIIKFLRSMCGRIANI.

The protein belongs to the G-protein coupled receptor 1 family.

It is found in the cell membrane. In terms of biological role, putative pheromone receptor implicated in the regulation of social and reproductive behavior. The sequence is that of Vomeronasal type-1 receptor 44 (Vmn1r44) from Mus musculus (Mouse).